The sequence spans 241 residues: Uridylate kinase (241 aa).

9–10 (GS) contacts ATP. A UMP-binding site is contributed by glycine 44. ATP-binding residues include glycine 45 and arginine 49. UMP is bound by residues aspartate 66 and 114 to 120 (IMPGQTT). Residues threonine 140, tyrosine 146, and aspartate 149 each contribute to the ATP site.

It belongs to the UMP kinase family. As to quaternary structure, homohexamer.

It localises to the cytoplasm. It carries out the reaction UMP + ATP = UDP + ADP. Its pathway is pyrimidine metabolism; CTP biosynthesis via de novo pathway; UDP from UMP (UMPK route): step 1/1. Its activity is regulated as follows. Inhibited by UTP. Its function is as follows. Catalyzes the reversible phosphorylation of UMP to UDP. The chain is Uridylate kinase from Haloquadratum walsbyi (strain DSM 16790 / HBSQ001).